A 321-amino-acid polypeptide reads, in one-letter code: MTGGLNKDFDWVVAKFEEMIKRETEVSIAIPTIRILIDVIRKSNSTTVVGLQKELEDAVKQLKSCPYNQSISLSSVCDSFIRFVTKRTELDFPNFDTCKSNLVERGEQLSNKSSMSRTKISQLADKFIRDGVTILVHGFSRVVLGLLLHAAFQGKRFSVIVTESRPDSSGYKTAARLQAANIPVKLIMDGGVSRIIDKVDYVLVGAEAIVENGGIVNKIGTYQISIVAKAFKKPFYVAAESFKFTRSYPLNQSDIENLKNDHISEPFKACRSCSSCENPEQLTIDSPTLDYTPPSYITLLFTELGVLTPSAVSDELIKLYC.

This sequence belongs to the eIF-2B alpha/beta/delta subunits family. Component of the translation initiation factor 2B (eIF2B) complex which is a heterodecamer of two sets of five different subunits: alpha, beta, gamma, delta and epsilon. Subunits alpha, beta and delta comprise a regulatory subcomplex and subunits epsilon and gamma comprise a catalytic subcomplex. Within the complex, the hexameric regulatory complex resides at the center, with the two heterodimeric catalytic subcomplexes bound on opposite sides.

It is found in the cytoplasm. Its subcellular location is the cytosol. Acts as a component of the translation initiation factor 2B (eIF2B) complex, which catalyzes the exchange of GDP for GTP on eukaryotic initiation factor 2 (eIF2) gamma subunit. Its guanine nucleotide exchange factor activity is repressed when bound to eIF2 complex phosphorylated on the alpha subunit, thereby limiting the amount of methionyl-initiator methionine tRNA available to the ribosome and consequently global translation is repressed. This is Translation initiation factor eIF2B subunit alpha (eif2b1) from Dictyostelium discoideum (Social amoeba).